The chain runs to 574 residues: Serine/arginine repetitive matrix protein 4 (574 aa).

Disordered stretches follow at residues 45–217, 257–291, 366–422, 454–508, and 526–574; these read LETP…HGGD, IVQNSESSDGKRRADYDSGNDTSSPPSSKTGITRS, DLIS…SYSL, YCSS…VSSR, and RSRS…RARR. Positions 51–72 are enriched in basic and acidic residues; the sequence is PKDDEEKVKAKDLVTKTHEKNG. 3 stretches are compositionally biased toward basic residues: residues 73–88, 102–120, and 128–184; these read HIKRRGRKRHSHRRAR, PKTKKKKKKSQRKRRRHRS, and VRKK…HRKA. Positions 194 to 217 are enriched in basic and acidic residues; it reads NRSEDCEKSGFRDGGRSSDVHGGD. The span at 275-289 shows a compositional bias: polar residues; it reads GNDTSSPPSSKTGIT. Basic and acidic residues predominate over residues 366–385; the sequence is DLISDRNRSPSHDRYEDGTR. A compositionally biased stretch (low complexity) spans 405–422; the sequence is RSLSSGRRSYSRSSSYSL. Positions 454-477 are enriched in basic residues; it reads YCSSCKSRKHSRRRPSSPMRKRRR. The span at 478-487 shows a compositional bias: basic and acidic residues; sequence DSPSHLEARR. Low complexity predominate over residues 496 to 508; that stretch reads IPYYRPSPSVSSR. Positions 526-539 are enriched in basic residues; that stretch reads RSRSCSRSRSRSHS. A compositionally biased stretch (low complexity) spans 540-559; sequence HTYSSYRSYSRSSSWNSLYS. The span at 560–574 shows a compositional bias: basic residues; it reads RRSRSRSRSYSRARR.

It belongs to the nSR100 family.

It localises to the nucleus. Functionally, splicing factor specifically required for neural cell differentiation. Acts in conjunction with nPTB/PTBP2 by binding directly to its regulated target transcripts and promotes neural-specific exon inclusion in many genes that function in neural cell differentiation. Required to promote the inclusion of neural-specific exon 10 in nPTB/PTBP2, leading to increased expression of neural-specific nPTB/PTBP2. The sequence is that of Serine/arginine repetitive matrix protein 4 (srrm4) from Danio rerio (Zebrafish).